Here is a 146-residue protein sequence, read N- to C-terminus: MKAIVQRVASARVDIAGQTVGAIGAGLLVLLCAERGDADAMADRMLAKLLKLRIFSDEAGKMNRSVQDIGGGLLVVSQFTLAADVSGGNRPSFTQAAAPDEGRRLYDYFVHRARAAHPLVATGEFGADMQVHLVNDGPVTIPLQMA.

Positions 137–138 (GP) match the Gly-cisPro motif, important for rejection of L-amino acids motif.

Belongs to the DTD family. In terms of assembly, homodimer.

It is found in the cytoplasm. The enzyme catalyses glycyl-tRNA(Ala) + H2O = tRNA(Ala) + glycine + H(+). It catalyses the reaction a D-aminoacyl-tRNA + H2O = a tRNA + a D-alpha-amino acid + H(+). An aminoacyl-tRNA editing enzyme that deacylates mischarged D-aminoacyl-tRNAs. Also deacylates mischarged glycyl-tRNA(Ala), protecting cells against glycine mischarging by AlaRS. Acts via tRNA-based rather than protein-based catalysis; rejects L-amino acids rather than detecting D-amino acids in the active site. By recycling D-aminoacyl-tRNA to D-amino acids and free tRNA molecules, this enzyme counteracts the toxicity associated with the formation of D-aminoacyl-tRNA entities in vivo and helps enforce protein L-homochirality. In Variovorax paradoxus (strain S110), this protein is D-aminoacyl-tRNA deacylase.